Consider the following 261-residue polypeptide: TM2 domain-containing protein 3 (261 aa).

A signal peptide spans 1–44 (MEAAAEPLRSVRHLSRVLLFLSQCYILSGDGSLNLEHSQPLAQA). The Extracellular segment spans residues 45 to 193 (IKDPGPTRTF…RTFPKLLYCN (149 aa)). N-linked (GlcNAc...) asparagine glycosylation is found at N101, N136, N154, N171, N183, and N193. The helical transmembrane segment at 194 to 214 (WTGGYKWSTALALSITLGGFG) threads the bilayer. A TM2 domain is found at 197-244 (GYKWSTALALSITLGGFGADRFYLGQWREGLGKLFSFGGLGIWTLIDV). Over 215–229 (ADRFYLGQWREGLGK) the chain is Cytoplasmic. The chain crosses the membrane as a helical span at residues 230 to 250 (LFSFGGLGIWTLIDVLLIGVG). Residues 251 to 261 (YVGPADGSLYI) lie on the Extracellular side of the membrane.

Belongs to the TM2 family.

The protein resides in the membrane. This Mus musculus (Mouse) protein is TM2 domain-containing protein 3 (Tm2d3).